Here is a 286-residue protein sequence, read N- to C-terminus: Shikimate dehydrogenase (NADP(+)) (286 aa).

Shikimate contacts are provided by residues 19–21 (SVS) and T66. K70 serves as the catalytic Proton acceptor. Shikimate-binding residues include N91 and D106. Residues 130–134 (GAGGS) and A225 contribute to the NADP(+) site. Y227 is a binding site for shikimate. G248 serves as a coordination point for NADP(+).

It belongs to the shikimate dehydrogenase family. In terms of assembly, homodimer.

The catalysed reaction is shikimate + NADP(+) = 3-dehydroshikimate + NADPH + H(+). It functions in the pathway metabolic intermediate biosynthesis; chorismate biosynthesis; chorismate from D-erythrose 4-phosphate and phosphoenolpyruvate: step 4/7. Involved in the biosynthesis of the chorismate, which leads to the biosynthesis of aromatic amino acids. Catalyzes the reversible NADPH linked reduction of 3-dehydroshikimate (DHSA) to yield shikimate (SA). The sequence is that of Shikimate dehydrogenase (NADP(+)) from Dehalococcoides mccartyi (strain CBDB1).